The chain runs to 122 residues: Large ribosomal subunit protein uL14 (122 aa).

The protein belongs to the universal ribosomal protein uL14 family. In terms of assembly, part of the 50S ribosomal subunit. Forms a cluster with proteins L3 and L19. In the 70S ribosome, L14 and L19 interact and together make contacts with the 16S rRNA in bridges B5 and B8.

In terms of biological role, binds to 23S rRNA. Forms part of two intersubunit bridges in the 70S ribosome. The polypeptide is Large ribosomal subunit protein uL14 (Helicobacter pylori (strain J99 / ATCC 700824) (Campylobacter pylori J99)).